We begin with the raw amino-acid sequence, 335 residues long: Large ribosomal subunit protein uL3 (335 aa).

Disordered regions lie at residues 1–35, 234–256, and 312–335; these read MPQPNRPRKGSMGFSPRKRAESEVPRFNSWPADDG, IGNLGPWNPSRVRSTVPQQGQTG, and AVRPNESPRLDPEVRYVSTASNQG. Residues 244–256 are compositionally biased toward polar residues; the sequence is RVRSTVPQQGQTG.

This sequence belongs to the universal ribosomal protein uL3 family. In terms of assembly, part of the 50S ribosomal subunit. Forms a cluster with proteins L14 and L24e.

Its function is as follows. One of the primary rRNA binding proteins, it binds directly near the 3'-end of the 23S rRNA, where it nucleates assembly of the 50S subunit. This is Large ribosomal subunit protein uL3 from Halobacterium salinarum (strain ATCC 29341 / DSM 671 / R1).